The primary structure comprises 225 residues: MTVCSRRNFVSGMGAVILMTGTSLPAFAKENKADKPKRYAMIHDENACIGCTACMDSCRDVNQVPEGVSRLEILRSEPYGEFPNQEYEFFRQSCQHCTNAPCVAVCPTGASFIDKETGIVDVHKDLCIGCQYCIAVCPYRVRFIHPIHRTADKCNFCRDTNLANGKQPACVEACPTKALTFGDMNDPTSAVSRKVKEKPVYRTKVELGTQPNLYHIPFQHGEPRR.

Positions 1–28 form a signal peptide, tat-type signal; that stretch reads MTVCSRRNFVSGMGAVILMTGTSLPAFA. 4Fe-4S ferredoxin-type domains lie at 39-67, 85-116, and 118-147; these read YAMI…VPEG, QEYE…IDKE, and GIVD…IHPI. Residues Cys48, Cys51, Cys54, Cys58, Cys94, Cys97, Cys102, Cys106, Cys127, Cys130, Cys133, Cys137, Cys154, Cys157, Cys170, and Cys174 each contribute to the [4Fe-4S] cluster site.

In terms of processing, predicted to be exported by the Tat system. The position of the signal peptide cleavage has not been experimentally proven.

In terms of biological role, probably involved in the transfer of electrons from the quinone pool to the type-c cytochromes. In Haemophilus influenzae (strain ATCC 51907 / DSM 11121 / KW20 / Rd), this protein is Protein NrfC homolog (nrfC).